Here is a 398-residue protein sequence, read N- to C-terminus: Carboxyaminopropylagmatine dehydrogenase (398 aa).

It belongs to the saccharopine dehydrogenase family.

It catalyses the reaction N(1)-[(S)-3-amino-3-carboxypropyl]agmatine + NADP(+) + H2O = L-aspartate 4-semialdehyde + agmatine + NADPH + H(+). It participates in amine and polyamine biosynthesis; spermidine biosynthesis. Dehydrogenase involved in the biosynthesis of spermidine via the carboxyaminopropylagmatine (CAPA) pathway. Catalyzes the reductive condensation of agmatine and L-aspartate-beta-semialdehyde (ASA) into CAPA. Shows activity toward putrescine and 1,3-diaminopropane, but the catalytic efficiency is three to four orders of magnitude lower than that for agmatine. Cannot use cadaverine or spermidine. The chain is Carboxyaminopropylagmatine dehydrogenase from Synechocystis sp. (strain ATCC 27184 / PCC 6803 / Kazusa).